Here is a 390-residue protein sequence, read N- to C-terminus: Scoulerine-9-O-methyltransferase 1 (390 aa).

Glu153 contacts substrate. S-adenosyl-L-methionine-binding positions include Met207, Ser211, Gly235, Asp258, 278–279 (DM), and Lys292. Residue His296 is the Proton acceptor of the active site. 296-297 (HD) provides a ligand contact to substrate.

This sequence belongs to the class I-like SAM-binding methyltransferase superfamily. Cation-independent O-methyltransferase family. COMT subfamily. As to quaternary structure, homodimer. As to expression, highly expressed in capsules. Expressed is stems. Expressed at low levels in roots.

It catalyses the reaction (S)-scoulerine + S-adenosyl-L-methionine = (S)-tetrahydrocolumbamine + S-adenosyl-L-homocysteine + H(+). The enzyme catalyses (S)-tetrahydrocolumbamine + S-adenosyl-L-methionine = (S)-tetrahydropalmatine + S-adenosyl-L-homocysteine + H(+). The catalysed reaction is (S)-norreticuline + S-adenosyl-L-methionine = (S)-norcodamine + S-adenosyl-L-homocysteine + H(+). It carries out the reaction (S)-reticuline + S-adenosyl-L-methionine = (S)-codamine + S-adenosyl-L-homocysteine + H(+). The protein operates within alkaloid biosynthesis. Methyltransferase involved in the biosynthesis of the benzylisoquinoline alkaloid noscapine. Catalyzes the conversion of (S)-scoulerine to (S)-tetrahydrocolumbamine. Can convert (S)-tetrahydrocolumbamine to tetrahydropalmatine. Can convert (S)-norreticuline to (S)-norcodamine. Can convert (S)-reticuline to (S)-codamine. Substrate preference is (S)-scoulerine &gt; (S)-tetrahydrocolumbamine &gt; (S)-norreticuline &gt; (S)-reticuline. The sequence is that of Scoulerine-9-O-methyltransferase 1 from Papaver somniferum (Opium poppy).